Here is a 336-residue protein sequence, read N- to C-terminus: MTRLNTCTFIKQIVKMTSIAALLGASLNSWAAPTEIKFSHVVAENTPKGQMALKFKQLVEERLPGEYQVNVFPNSQLFGDNNELSALLLNDVQFVAPSLSKFERYTKKLQLFDLPFLFKDMDAVNRFQQSDAGQQLLNSMKRKGVVGLGYLHNGMKQFSASSPLVLPEDAQGKKFRIMASDVLAAQFQAVEAIPVKKPFSEVFTLLQTRAIDGQENTWSNIYSKKFYEVQSNITESNHGVLDYMVVTSNTFWKSLPADKRKVIKASLDEAIAYGNEIAAAKVNKDKQAIIDSKRSEVTYLTPEQRAAWVNAMKPVWAQFEDKIGKDLIDAAVASNE.

An N-terminal signal peptide occupies residues 1–31; that stretch reads MTRLNTCTFIKQIVKMTSIAALLGASLNSWA. K48, K101, R176, N216, N220, and Y243 together coordinate (S)-malate. K48, K101, R176, N216, N220, and Y243 together coordinate succinate.

It belongs to the bacterial solute-binding protein 7 family. The complex comprises the extracytoplasmic solute receptor protein DctP, and the two transmembrane proteins DctQ and DctM.

The protein resides in the periplasm. In terms of biological role, part of the tripartite ATP-independent periplasmic (TRAP) transport system DctPQM involved in C4-dicarboxylates uptake. Required for the utilization of succinate, fumarate, L-malate and alpha-ketoglutarate. Binds succinate and malate. In Shewanella loihica (strain ATCC BAA-1088 / PV-4), this protein is C4-dicarboxylate-binding periplasmic protein DctP.